Here is a 304-residue protein sequence, read N- to C-terminus: Quorum-quenching protein AidA (304 aa).

This sequence belongs to the AB hydrolase superfamily.

Its function is as follows. Involved in quorum quenching (QQ). Inhibits motility and biofilm formation. Could contribute in bacterial competition, as it is capable of hydrolyzing the signaling molecules that mediate interspecies communication. This chain is Quorum-quenching protein AidA, found in Acinetobacter baumannii (strain MDR-ZJ06).